A 205-amino-acid chain; its full sequence is Octanoyltransferase (205 aa).

Residues 29-204 (AETPDEIWIV…HLLQQLDQKN (176 aa)) enclose the BPL/LPL catalytic domain. Substrate is bound by residues 68 to 75 (RGGQVTYH), 135 to 137 (ALG), and 148 to 150 (GVS). The active-site Acyl-thioester intermediate is the C166.

The protein belongs to the LipB family.

It localises to the cytoplasm. It carries out the reaction octanoyl-[ACP] + L-lysyl-[protein] = N(6)-octanoyl-L-lysyl-[protein] + holo-[ACP] + H(+). The protein operates within protein modification; protein lipoylation via endogenous pathway; protein N(6)-(lipoyl)lysine from octanoyl-[acyl-carrier-protein]: step 1/2. Its function is as follows. Catalyzes the transfer of endogenously produced octanoic acid from octanoyl-acyl-carrier-protein onto the lipoyl domains of lipoate-dependent enzymes. Lipoyl-ACP can also act as a substrate although octanoyl-ACP is likely to be the physiological substrate. The chain is Octanoyltransferase from Dechloromonas aromatica (strain RCB).